Reading from the N-terminus, the 86-residue chain is Large ribosomal subunit protein uL23 (86 aa).

Belongs to the universal ribosomal protein uL23 family. In terms of assembly, part of the 50S ribosomal subunit. Contacts protein L29.

Binds to 23S rRNA. One of the proteins that surrounds the polypeptide exit tunnel on the outside of the ribosome. The protein is Large ribosomal subunit protein uL23 of Pyrococcus horikoshii (strain ATCC 700860 / DSM 12428 / JCM 9974 / NBRC 100139 / OT-3).